A 366-amino-acid chain; its full sequence is Histidinol-phosphate aminotransferase 2 (366 aa).

An N6-(pyridoxal phosphate)lysine modification is found at lysine 226.

It belongs to the class-II pyridoxal-phosphate-dependent aminotransferase family. Histidinol-phosphate aminotransferase subfamily. As to quaternary structure, homodimer. It depends on pyridoxal 5'-phosphate as a cofactor.

It carries out the reaction L-histidinol phosphate + 2-oxoglutarate = 3-(imidazol-4-yl)-2-oxopropyl phosphate + L-glutamate. It participates in amino-acid biosynthesis; L-histidine biosynthesis; L-histidine from 5-phospho-alpha-D-ribose 1-diphosphate: step 7/9. This chain is Histidinol-phosphate aminotransferase 2, found in Cupriavidus pinatubonensis (strain JMP 134 / LMG 1197) (Cupriavidus necator (strain JMP 134)).